Reading from the N-terminus, the 122-residue chain is Large ribosomal subunit protein uL14 (122 aa).

The protein belongs to the universal ribosomal protein uL14 family. As to quaternary structure, part of the 50S ribosomal subunit. Forms a cluster with proteins L3 and L19. In the 70S ribosome, L14 and L19 interact and together make contacts with the 16S rRNA in bridges B5 and B8.

Binds to 23S rRNA. Forms part of two intersubunit bridges in the 70S ribosome. This Beijerinckia indica subsp. indica (strain ATCC 9039 / DSM 1715 / NCIMB 8712) protein is Large ribosomal subunit protein uL14.